A 191-amino-acid polypeptide reads, in one-letter code: Protein GrpE (191 aa).

It belongs to the GrpE family. In terms of assembly, homodimer.

It is found in the cytoplasm. In terms of biological role, participates actively in the response to hyperosmotic and heat shock by preventing the aggregation of stress-denatured proteins, in association with DnaK and GrpE. It is the nucleotide exchange factor for DnaK and may function as a thermosensor. Unfolded proteins bind initially to DnaJ; upon interaction with the DnaJ-bound protein, DnaK hydrolyzes its bound ATP, resulting in the formation of a stable complex. GrpE releases ADP from DnaK; ATP binding to DnaK triggers the release of the substrate protein, thus completing the reaction cycle. Several rounds of ATP-dependent interactions between DnaJ, DnaK and GrpE are required for fully efficient folding. The protein is Protein GrpE of Listeria monocytogenes serotype 1/2a (strain 10403S).